A 36-amino-acid chain; its full sequence is GPVQPTYPGDDAPVEDLVRFYNDLQQYLNVVTRHRY.

Tyrosine amide is present on Tyr-36.

Belongs to the NPY family.

The protein resides in the secreted. In terms of biological role, hormone secreted by pancreatic cells that acts as a regulator of pancreatic and gastrointestinal functions. The chain is Pancreatic polypeptide (PPY) from Larus argentatus (Herring gull).